Here is a 230-residue protein sequence, read N- to C-terminus: uncharacterized protein (230 aa).

This is an uncharacterized protein from Mycobacterium tuberculosis (strain ATCC 25618 / H37Rv).